Here is a 458-residue protein sequence, read N- to C-terminus: tRNA modification GTPase MnmE (458 aa).

The (6S)-5-formyl-5,6,7,8-tetrahydrofolate site is built by Arg-26, Glu-88, and Arg-127. Positions 224 to 378 constitute a TrmE-type G domain; it reads GLSTAIIGRP…IEDRINQLFF (155 aa). Asn-234 serves as a coordination point for K(+). Residues 234-239, 253-259, and 278-281 each bind GTP; these read NVGKSS, TDIAGTT, and DTAG. Ser-238 contributes to the Mg(2+) binding site. K(+)-binding residues include Thr-253, Ile-255, and Thr-258. Thr-259 contacts Mg(2+). Lys-458 contacts (6S)-5-formyl-5,6,7,8-tetrahydrofolate.

The protein belongs to the TRAFAC class TrmE-Era-EngA-EngB-Septin-like GTPase superfamily. TrmE GTPase family. As to quaternary structure, homodimer. Heterotetramer of two MnmE and two MnmG subunits. K(+) serves as cofactor.

It is found in the cytoplasm. Functionally, exhibits a very high intrinsic GTPase hydrolysis rate. Involved in the addition of a carboxymethylaminomethyl (cmnm) group at the wobble position (U34) of certain tRNAs, forming tRNA-cmnm(5)s(2)U34. In Streptococcus pyogenes serotype M12 (strain MGAS9429), this protein is tRNA modification GTPase MnmE.